The sequence spans 450 residues: Probable ECA polymerase (450 aa).

A run of 11 helical transmembrane segments spans residues 6–26, 37–57, 63–83, 118–138, 155–175, 181–201, 207–227, 228–248, 341–361, 378–398, and 410–430; these read FSGLFVVWLLCTLFIATLTWF, VFFSLLFLLTFFFGFPLTSVL, VGVAPPEILLQALLSAGCFYA, VILMGIALVSVGIFFMHNGFL, GVALKRFFYFFIPAMLVVYFL, AWLFFLVSTVAFGLLTYMIVG, IIIAFAIFLFIGIIRGWISLW, MLAAAGVLGIVGMFWLALKRY, LVVMGGALFIPLGAIVVGLII, YKAAILHSFCFGAIFNMIVLA, and VFFIVVFGACLMIAKLLYWLF.

The protein belongs to the WzyE family. Probably part of a complex composed of WzxE, WzyE and WzzE.

The protein resides in the cell inner membrane. It functions in the pathway bacterial outer membrane biogenesis; enterobacterial common antigen biosynthesis. Probably involved in the polymerization of enterobacterial common antigen (ECA) trisaccharide repeat units. The sequence is that of Probable ECA polymerase from Shigella boydii serotype 18 (strain CDC 3083-94 / BS512).